The following is a 177-amino-acid chain: Large ribosomal subunit protein uL6 (177 aa).

It belongs to the universal ribosomal protein uL6 family. In terms of assembly, part of the 50S ribosomal subunit.

Its function is as follows. This protein binds to the 23S rRNA, and is important in its secondary structure. It is located near the subunit interface in the base of the L7/L12 stalk, and near the tRNA binding site of the peptidyltransferase center. The sequence is that of Large ribosomal subunit protein uL6 from Paracoccus denitrificans (strain Pd 1222).